The following is a 236-amino-acid chain: Ribosome assembly factor mrt4 (236 aa).

It belongs to the universal ribosomal protein uL10 family. In terms of assembly, associates with the pre-60S ribosomal particle.

The protein resides in the nucleus. It is found in the nucleolus. The protein localises to the cytoplasm. Its function is as follows. Component of the ribosome assembly machinery. Nuclear paralog of the ribosomal protein P0, it binds pre-60S subunits at an early stage of assembly in the nucleolus, and is replaced by P0 in cytoplasmic pre-60S subunits and mature 80S ribosomes. This is Ribosome assembly factor mrt4 from Eremothecium gossypii (strain ATCC 10895 / CBS 109.51 / FGSC 9923 / NRRL Y-1056) (Yeast).